Here is a 689-residue protein sequence, read N- to C-terminus: Elongation factor G (689 aa).

The 275-residue stretch at lysine 8–valine 282 folds into the tr-type G domain. GTP contacts are provided by residues alanine 17–threonine 24, aspartate 81–histidine 85, and asparagine 135–aspartate 138.

Belongs to the TRAFAC class translation factor GTPase superfamily. Classic translation factor GTPase family. EF-G/EF-2 subfamily.

Its subcellular location is the cytoplasm. Its function is as follows. Catalyzes the GTP-dependent ribosomal translocation step during translation elongation. During this step, the ribosome changes from the pre-translocational (PRE) to the post-translocational (POST) state as the newly formed A-site-bound peptidyl-tRNA and P-site-bound deacylated tRNA move to the P and E sites, respectively. Catalyzes the coordinated movement of the two tRNA molecules, the mRNA and conformational changes in the ribosome. The sequence is that of Elongation factor G from Halothermothrix orenii (strain H 168 / OCM 544 / DSM 9562).